A 2528-amino-acid polypeptide reads, in one-letter code: Reducing polyketide synthase PKS1 (2528 aa).

In terms of domain architecture, Ketosynthase family 3 (KS3) spans 11–436 (ITPIAVVGMS…GANVHAILES (426 aa)). Residues Cys-186, His-321, and His-359 each act as for beta-ketoacyl synthase activity in the active site. The interval 573–868 (FVFTGQGAQW…LGGPISQVID (296 aa)) is malonyl-CoA:ACP transacylase (MAT). An N-terminal hotdog fold region spans residues 954–1092 (LDLIGVFDVH…GLISVLKSSK (139 aa)). A PKS/mFAS DH domain is found at 954 to 1278 (LDLIGVFDVH…LVALDRPNSS (325 aa)). Residues 956–1277 (LIGVFDVHSS…TLVALDRPNS (322 aa)) are dehydratase (DH) domain. The active-site Proton acceptor; for dehydratase activity is His-986. The interval 1122-1278 (KTEWDVKDMY…LVALDRPNSS (157 aa)) is C-terminal hotdog fold. Catalysis depends on Asp-1187, which acts as the Proton donor; for dehydratase activity. The interval 1827-2139 (GLLDSLHFTV…TGRHMGKMVA (313 aa)) is enoyl reductase (ER) domain. A ketoreductase (KR) domain region spans residues 2164–2341 (ASYLLVGGVG…ATVIDIGAVH (178 aa)). The Carrier domain occupies 2442–2519 (SAVTIVLSAL…ALAVKIAARS (78 aa)). The residue at position 2479 (Ser-2479) is an O-(pantetheine 4'-phosphoryl)serine.

Its pathway is mycotoxin biosynthesis. Reducing polyketide synthase (PKS); part of the Tox1A locus, one of the 2 loci that mediate the biosynthesis of T-toxin, a family of linear polyketides 37 to 45 carbons in length, of which the major component is 41 carbons, and which leads to high virulence to maize. One of the PKSs (PKS1 or PKS2) could synthesize a precursor, used subsequently by the other PKS as starter unit, to add additional carbons. Variability in the length of the final carbon backbone C35-47 could be achieved by varying the number of condensation cycles, or use of different starter or extender units or might be due to decarboxylation of the penultimate product, catalyzed by DEC1. Additional proteins are required for the biosynthesis of T-toxin, including oxidoreductases RED1, RED2, RED3, LAM1 and OXI1, as well as esterase TOX9. In Cochliobolus heterostrophus (strain C4 / ATCC 48331 / race T) (Southern corn leaf blight fungus), this protein is Reducing polyketide synthase PKS1.